We begin with the raw amino-acid sequence, 532 residues long: Phosphoribosylamine--glycine ligase, chloroplastic (532 aa).

The N-terminal 75 residues, 1–75 (MSSLCASNCY…IQRRLFLLRC (75 aa)), are a transit peptide targeting the chloroplast. The region spanning 204–412 (KNLCHKYNIP…LAKVLLAACK (209 aa)) is the ATP-grasp domain.

This sequence belongs to the GARS family.

The protein localises to the plastid. It is found in the chloroplast. The enzyme catalyses 5-phospho-beta-D-ribosylamine + glycine + ATP = N(1)-(5-phospho-beta-D-ribosyl)glycinamide + ADP + phosphate + H(+). It functions in the pathway purine metabolism; IMP biosynthesis via de novo pathway; N(1)-(5-phospho-D-ribosyl)glycinamide from 5-phospho-alpha-D-ribose 1-diphosphate: step 2/2. The sequence is that of Phosphoribosylamine--glycine ligase, chloroplastic (PUR2) from Arabidopsis thaliana (Mouse-ear cress).